A 467-amino-acid polypeptide reads, in one-letter code: UDP-glycosyltransferase 71D2 (467 aa).

Residues Ser283, 339–341 (SPQ), 356–364 (HCGWNSIVE), and 378–381 (YAEQ) contribute to the UDP-alpha-D-glucose site.

This sequence belongs to the UDP-glycosyltransferase family.

This is UDP-glycosyltransferase 71D2 (UGT71D2) from Arabidopsis thaliana (Mouse-ear cress).